Reading from the N-terminus, the 250-residue chain is Troponin I 1 (250 aa).

Disordered stretches follow at residues 1–59 (MSQI…ERKK) and 194–250 (SVFT…ADEE). Basic and acidic residues-rich tracts occupy residues 21-45 (DAQRKAQEREAKKAEVRKRLEEAGQ) and 206-221 (DKPEWSKKKEEKKEES). Residues 229-250 (PVEEEETAASEGEEEEEEADEE) are compositionally biased toward acidic residues.

Belongs to the troponin I family. Strongly expressed in body wall muscle during embryogenesis, reduces during the larval stages to adult. In late-stage larvae and adults, expression is evident in the proximal gonad of both hermaphrodites and males.

Its function is as follows. Troponin I is the inhibitory subunit of troponin, the thin filament regulatory complex which confers calcium-sensitivity to muscle actomyosin ATPase activity. This is Troponin I 1 (tni-1) from Caenorhabditis elegans.